The primary structure comprises 249 residues: Probable cobalt-factor III C(17)-methyltransferase (249 aa).

Belongs to the precorrin methyltransferase family.

The enzyme catalyses Co(II)-factor III + S-adenosyl-L-methionine + H(+) = Co(II)-factor IV + S-adenosyl-L-homocysteine. It functions in the pathway cofactor biosynthesis; adenosylcobalamin biosynthesis; cob(II)yrinate a,c-diamide from sirohydrochlorin (anaerobic route): step 3/10. Its function is as follows. Methyltransferase that likely catalyzes the ring contraction and methylation of C-17 in cobalt-factor III to form cobalt-factor IV. May also convert cobalt-precorrin-3 to cobalt-precorrin-4. This is Probable cobalt-factor III C(17)-methyltransferase (cbiH) from Methanocaldococcus jannaschii (strain ATCC 43067 / DSM 2661 / JAL-1 / JCM 10045 / NBRC 100440) (Methanococcus jannaschii).